The chain runs to 351 residues: Phosphoribosylformylglycinamidine cyclo-ligase (351 aa).

The protein belongs to the AIR synthase family.

The protein localises to the cytoplasm. It catalyses the reaction 2-formamido-N(1)-(5-O-phospho-beta-D-ribosyl)acetamidine + ATP = 5-amino-1-(5-phospho-beta-D-ribosyl)imidazole + ADP + phosphate + H(+). It functions in the pathway purine metabolism; IMP biosynthesis via de novo pathway; 5-amino-1-(5-phospho-D-ribosyl)imidazole from N(2)-formyl-N(1)-(5-phospho-D-ribosyl)glycinamide: step 2/2. This is Phosphoribosylformylglycinamidine cyclo-ligase from Lysinibacillus sphaericus (strain C3-41).